The primary structure comprises 247 residues: ATP synthase subunit a, chloroplastic (247 aa).

A run of 5 helical transmembrane segments spans residues 38–58, 95–115, 134–154, 199–219, and 220–240; these read QVLI…VIAV, VPFI…GALL, INTT…AGLS, LVVV…VMFL, and GLFT…AYIG.

The protein belongs to the ATPase A chain family. As to quaternary structure, F-type ATPases have 2 components, CF(1) - the catalytic core - and CF(0) - the membrane proton channel. CF(1) has five subunits: alpha(3), beta(3), gamma(1), delta(1), epsilon(1). CF(0) has four main subunits: a, b, b' and c.

It localises to the plastid. It is found in the chloroplast thylakoid membrane. In terms of biological role, key component of the proton channel; it plays a direct role in the translocation of protons across the membrane. In Agrostis stolonifera (Creeping bentgrass), this protein is ATP synthase subunit a, chloroplastic.